Consider the following 739-residue polypeptide: DEAD-box ATP-dependent RNA helicase 32 (739 aa).

The Q motif motif lies at 71-99 (RKFAQLPISDKTKRGLKDAKYVDMTDVQS). Residues 102 to 277 (IPHALCGRDI…RLSLRDPEYI (176 aa)) enclose the Helicase ATP-binding domain. 115–122 (ARTGSGKT) serves as a coordination point for ATP. Positions 225–228 (DEAD) match the DEAD box motif. Residues 303-461 (KLDMLWSFIK…EVSRLLAALL (159 aa)) form the Helicase C-terminal domain. Residues 643–689 (GAEMRKADIEDKKVDKERRREKRMKQKIKRKRGAMEDEEEEEEEDHD) adopt a coiled-coil conformation. Residues 656-725 (VDKERRREKR…GGKINTDSLS (70 aa)) are disordered. Positions 661-674 (RREKRMKQKIKRKR) are enriched in basic residues. The span at 678–688 (EDEEEEEEEDH) shows a compositional bias: acidic residues.

The protein belongs to the DEAD box helicase family. DDX10/DBP4 subfamily.

It carries out the reaction ATP + H2O = ADP + phosphate + H(+). This is DEAD-box ATP-dependent RNA helicase 32 (RH32) from Arabidopsis thaliana (Mouse-ear cress).